The chain runs to 395 residues: E3 ubiquitin-protein ligase RNFT1 (395 aa).

Disordered stretches follow at residues 1 to 58 and 78 to 97; these read MQAS…SSRN and YSHSEARPPDDFATESGEHG. Helical transmembrane passes span 118–138, 165–185, 193–213, 216–236, 258–278, and 283–303; these read ILILGIKLVMQHITGISLGIG, CAWLLVFLAGSSVLLYYTFHS, IFLNPTLEQLSFWEVLWIVGI, FILKFFFMGLKCLILLVPSFI, IFVPIPVWFRYLISYGEFGNV, and LGILLALLYLILKLLDFFGHL. The required for ubiquitin ligase activity and for protection against ER stress-induced cell death stretch occupies residues 328–379; sequence CSDMDGICTICQAEFQKPVLLFCQHIFCEECITLWFNREKTCPLCRTVISEC. The RING-type zinc finger occupies 335 to 373; it reads CTICQAEFQKPVLLFCQHIFCEECITLWFNREKTCPLCR.

Predominantly expressed in testis.

The protein resides in the early endosome membrane. It catalyses the reaction S-ubiquitinyl-[E2 ubiquitin-conjugating enzyme]-L-cysteine + [acceptor protein]-L-lysine = [E2 ubiquitin-conjugating enzyme]-L-cysteine + N(6)-ubiquitinyl-[acceptor protein]-L-lysine.. Its pathway is protein modification; protein ubiquitination. Its function is as follows. E3 ubiquitin-protein ligase that acts in the endoplasmic reticulum (ER)-associated degradation (ERAD) pathway, which targets misfolded proteins that accumulate in the endoplasmic reticulum (ER) for ubiquitination and subsequent proteasome-mediated degradation. Protects cells from ER stress-induced apoptosis. The polypeptide is E3 ubiquitin-protein ligase RNFT1 (Rnft1) (Mus musculus (Mouse)).